The sequence spans 476 residues: Aspartyl/glutamyl-tRNA(Asn/Gln) amidotransferase subunit B (476 aa).

This sequence belongs to the GatB/GatE family. GatB subfamily. Heterotrimer of A, B and C subunits.

It carries out the reaction L-glutamyl-tRNA(Gln) + L-glutamine + ATP + H2O = L-glutaminyl-tRNA(Gln) + L-glutamate + ADP + phosphate + H(+). The enzyme catalyses L-aspartyl-tRNA(Asn) + L-glutamine + ATP + H2O = L-asparaginyl-tRNA(Asn) + L-glutamate + ADP + phosphate + 2 H(+). Functionally, allows the formation of correctly charged Asn-tRNA(Asn) or Gln-tRNA(Gln) through the transamidation of misacylated Asp-tRNA(Asn) or Glu-tRNA(Gln) in organisms which lack either or both of asparaginyl-tRNA or glutaminyl-tRNA synthetases. The reaction takes place in the presence of glutamine and ATP through an activated phospho-Asp-tRNA(Asn) or phospho-Glu-tRNA(Gln). The protein is Aspartyl/glutamyl-tRNA(Asn/Gln) amidotransferase subunit B of Bacillus licheniformis (strain ATCC 14580 / DSM 13 / JCM 2505 / CCUG 7422 / NBRC 12200 / NCIMB 9375 / NCTC 10341 / NRRL NRS-1264 / Gibson 46).